The primary structure comprises 63 residues: Large ribosomal subunit protein bL28 (63 aa).

This sequence belongs to the bacterial ribosomal protein bL28 family.

This is Large ribosomal subunit protein bL28 from Geotalea daltonii (strain DSM 22248 / JCM 15807 / FRC-32) (Geobacter daltonii).